A 199-amino-acid polypeptide reads, in one-letter code: Recombination protein RecR (199 aa).

Residues 57–72 form a C4-type zinc finger; sequence CRQCRVLTEEPVCGLC. The region spanning 80–175 is the Toprim domain; it reads SLLCVVEGPA…RTTRIAHGVP (96 aa).

The protein belongs to the RecR family.

May play a role in DNA repair. It seems to be involved in an RecBC-independent recombinational process of DNA repair. It may act with RecF and RecO. This Alkalilimnicola ehrlichii (strain ATCC BAA-1101 / DSM 17681 / MLHE-1) protein is Recombination protein RecR.